The chain runs to 486 residues: NADH-quinone oxidoreductase subunit N (486 aa).

Transmembrane regions (helical) follow at residues 8–28 (LIAL…ILSI), 36–56 (FIAF…YFLI), 74–94 (ILYI…AYPW), 104–124 (EFYL…ISNH), 125–145 (MASL…LIAY), 160–180 (LVLS…IYAI), 204–224 (VLFG…MVPF), 239–259 (VLSF…LYFF), 270–290 (IFLI…LMAI), 298–318 (FFGY…LVSK), 329–349 (GIFL…INLF), 374–394 (ASIV…LGFF), 407–427 (HLWT…YGYL), and 459–479 (ILIF…NPLI).

This sequence belongs to the complex I subunit 2 family. NDH-1 is composed of 13 different subunits. Subunits NuoA, H, J, K, L, M, N constitute the membrane sector of the complex.

The protein localises to the cell membrane. It catalyses the reaction a quinone + NADH + 5 H(+)(in) = a quinol + NAD(+) + 4 H(+)(out). In terms of biological role, NDH-1 shuttles electrons from NADH, via FMN and iron-sulfur (Fe-S) centers, to quinones in the respiratory chain. The immediate electron acceptor for the enzyme in this species is believed to be ubiquinone. Couples the redox reaction to proton translocation (for every two electrons transferred, four hydrogen ions are translocated across the cytoplasmic membrane), and thus conserves the redox energy in a proton gradient. In Buchnera aphidicola subsp. Schizaphis graminum (strain Sg), this protein is NADH-quinone oxidoreductase subunit N.